The sequence spans 104 residues: uncharacterized protein (104 aa).

This is an uncharacterized protein from Archaeoglobus fulgidus (strain ATCC 49558 / DSM 4304 / JCM 9628 / NBRC 100126 / VC-16).